The sequence spans 144 residues: Putative 2'-deoxynucleoside 5'-phosphate N-hydrolase 1 (144 aa).

Residues 7 to 13, Tyr-22, His-39, Glu-83, and 107 to 109 contribute to the substrate site; these read YFCGSIR and SGM.

Belongs to the 2'-deoxynucleoside 5'-phosphate N-hydrolase 1 family. Monomer and homodimer.

The protein localises to the cytoplasm. It is found in the nucleus. The catalysed reaction is a pyrimidine 2'-deoxyribonucleoside 5'-phosphate + H2O = a pyrimidine nucleobase + 2-deoxy-D-ribose 5-phosphate. It catalyses the reaction a purine 2'-deoxyribonucleoside 5'-phosphate + H2O = a purine nucleobase + 2-deoxy-D-ribose 5-phosphate. Functionally, catalyzes the cleavage of the N-glycosidic bond of deoxyribonucleoside 5'-monophosphates to yield deoxyribose 5-phosphate and a purine or pyrimidine base. This chain is Putative 2'-deoxynucleoside 5'-phosphate N-hydrolase 1, found in Trichoplax adhaerens (Trichoplax reptans).